We begin with the raw amino-acid sequence, 153 residues long: uncharacterized protein (153 aa).

3 consecutive transmembrane segments (helical) span residues 17–37 (ITLI…SMFF), 44–64 (FLLC…IGMG), and 118–138 (FVFI…TLII).

To M.jannaschii MJ0129 and MJ0554.

It is found in the cell membrane. This is an uncharacterized protein from Methanocaldococcus jannaschii (strain ATCC 43067 / DSM 2661 / JAL-1 / JCM 10045 / NBRC 100440) (Methanococcus jannaschii).